The following is an 890-amino-acid chain: Protein FAM171A1 (890 aa).

The signal sequence occupies residues 1-21 (MSRSATLLLCLLGCHVWKAVT). Residues 22–303 (KTLREPGAGA…VTQDITTYHT (282 aa)) are Extracellular-facing. Residues N159, N190, and N194 are each glycosylated (N-linked (GlcNAc...) asparagine). A helical membrane pass occupies residues 304-324 (VFLLAILGGMAFILLVLLCLL). Topologically, residues 325 to 890 (LYYCRRKCLK…ERPLMAFNIK (566 aa)) are cytoplasmic. Residues S358, S360, S371, S422, S443, and S525 each carry the phosphoserine modification. 2 disordered regions span residues 730–759 (AGRN…RGDA) and 818–890 (EGSS…FNIK). A compositionally biased stretch (basic and acidic residues) spans 747 to 757 (NEPKSARKGRG). Over residues 822–833 (RRSGGQLPSLQE) the composition is skewed to polar residues. Residues S849 and S855 each carry the phosphoserine modification. Residues 858–869 (EEEEDDDDDDQG) show a composition bias toward acidic residues. The segment covering 870 to 883 (EDKKSPWQKREERP) has biased composition (basic and acidic residues).

It belongs to the FAM171 family. In terms of assembly, interacts with ADAM10, NSG1 and OAZ1. Expressed in heart, brain, liver, skeletal muscle, kidney and pancreas. In brain, expressed by glia, pyramidal neurons and astrocytes (at protein level). Highly expressed in placental trophoblasts.

Its subcellular location is the cell membrane. Involved in the regulation of the cytoskeletal dynamics, plays a role in actin stress fiber formation. The polypeptide is Protein FAM171A1 (Homo sapiens (Human)).